The sequence spans 340 residues: Photosystem II protein D1 (340 aa).

3 helical membrane-spanning segments follow: residues 25-42 (YIGW…LATV), 114-129 (HFFL…EWEF), and 138-152 (WIFV…AAAA). His114 serves as a coordination point for chlorophyll a. Trp122 contributes to the pheophytin a binding site. Residues Asp166 and Glu185 each coordinate [CaMn4O5] cluster. Residues 193-214 (FHILGVAGVFGGSLFSAMHGSL) traverse the membrane as a helical segment. His194 contacts chlorophyll a. Residues His211 and 260 to 261 (SF) each bind a quinone. A Fe cation-binding site is contributed by His211. A Fe cation-binding site is contributed by His268. Residues 270 to 284 (FLAAWPVIGIWFTSL) form a helical membrane-spanning segment. His328, Glu329, Asp338, and Ala340 together coordinate [CaMn4O5] cluster.

The protein belongs to the reaction center PufL/M/PsbA/D family. In terms of assembly, PSII is composed of 1 copy each of membrane proteins PsbA, PsbB, PsbC, PsbD, PsbE, PsbF, PsbH, PsbI, PsbJ, PsbK, PsbL, PsbM, PsbT, PsbX, PsbY, PsbZ, Psb30/Ycf12, at least 3 peripheral proteins of the oxygen-evolving complex and a large number of cofactors. It forms dimeric complexes. The cofactor is The D1/D2 heterodimer binds P680, chlorophylls that are the primary electron donor of PSII, and subsequent electron acceptors. It shares a non-heme iron and each subunit binds pheophytin, quinone, additional chlorophylls, carotenoids and lipids. D1 provides most of the ligands for the Mn4-Ca-O5 cluster of the oxygen-evolving complex (OEC). There is also a Cl(-1) ion associated with D1 and D2, which is required for oxygen evolution. The PSII complex binds additional chlorophylls, carotenoids and specific lipids.. In terms of processing, tyr-157 forms a radical intermediate that is referred to as redox-active TyrZ, YZ or Y-Z.

Its subcellular location is the plastid. It localises to the chloroplast thylakoid membrane. The enzyme catalyses 2 a plastoquinone + 4 hnu + 2 H2O = 2 a plastoquinol + O2. Its function is as follows. Photosystem II (PSII) is a light-driven water:plastoquinone oxidoreductase that uses light energy to abstract electrons from H(2)O, generating O(2) and a proton gradient subsequently used for ATP formation. It consists of a core antenna complex that captures photons, and an electron transfer chain that converts photonic excitation into a charge separation. The D1/D2 (PsbA/PsbD) reaction center heterodimer binds P680, the primary electron donor of PSII as well as several subsequent electron acceptors. The protein is Photosystem II protein D1 of Amphidinium operculatum (Dinoflagellate).